The chain runs to 788 residues: Histidine--tRNA ligase, cytoplasmic (788 aa).

A disordered region spans residues 252-286 (PQACEENEAGSSTENPHASGEKPKGDKKSKKKKTL).

This sequence belongs to the class-II aminoacyl-tRNA synthetase family. Homodimer.

The enzyme catalyses tRNA(His) + L-histidine + ATP = L-histidyl-tRNA(His) + AMP + diphosphate + H(+). In Oryza sativa subsp. japonica (Rice), this protein is Histidine--tRNA ligase, cytoplasmic.